The sequence spans 367 residues: Ribosomal lysine N-methyltransferase 5 (367 aa).

A disordered region spans residues 55-74; sequence EGGRKKKRVRRRNKASSVEE. Basic residues predominate over residues 58–68; sequence RKKKRVRRRNK. Residues W110, 170–172, D192, W256, and M288 each bind S-adenosyl-L-methionine; that span reads GAG.

The protein belongs to the class I-like SAM-binding methyltransferase superfamily. RKM5 family.

Its function is as follows. S-adenosyl-L-methionine-dependent protein-lysine N-methyltransferase that monomethylates 60S ribosomal protein L1 (RPL1A and RPL1B) at 'Lys-46'. This is Ribosomal lysine N-methyltransferase 5 (RKM5) from Saccharomyces cerevisiae (strain VIN 13) (Baker's yeast).